We begin with the raw amino-acid sequence, 292 residues long: Ribosomal protein L11 methyltransferase (292 aa).

4 residues coordinate S-adenosyl-L-methionine: Thr144, Gly165, Asp187, and Asn229.

It belongs to the methyltransferase superfamily. PrmA family.

It is found in the cytoplasm. It catalyses the reaction L-lysyl-[protein] + 3 S-adenosyl-L-methionine = N(6),N(6),N(6)-trimethyl-L-lysyl-[protein] + 3 S-adenosyl-L-homocysteine + 3 H(+). In terms of biological role, methylates ribosomal protein L11. This is Ribosomal protein L11 methyltransferase from Saccharophagus degradans (strain 2-40 / ATCC 43961 / DSM 17024).